The following is a 667-amino-acid chain: Probable E3 ubiquitin-protein ligase HIP1 (667 aa).

Disordered stretches follow at residues 142–163 (NGAS…NGQA) and 285–311 (TTAG…RSFR). A compositionally biased stretch (low complexity) spans 288-309 (GLSSSSYDPSGGNNNSGGSQRS). The RING-type; atypical zinc finger occupies 620–661 (CCICQEEYVDGDDLGTLDCGHDFHVGCVRQWLVVKNTCPICK).

Belongs to the RING-type zinc finger family. Interacts with HAL3.

It catalyses the reaction S-ubiquitinyl-[E2 ubiquitin-conjugating enzyme]-L-cysteine + [acceptor protein]-L-lysine = [E2 ubiquitin-conjugating enzyme]-L-cysteine + N(6)-ubiquitinyl-[acceptor protein]-L-lysine.. The protein operates within protein modification; protein ubiquitination. Its function is as follows. Probable E3 ubiquitin-protein ligase that functions downstream of HAL3 and is required for HAL3-regulated plant growth. Activation of HIP1 by HAL3 may lead to the degradation of cell cycle suppressors, resulting in enhancement of cell division and plant growth. This is Probable E3 ubiquitin-protein ligase HIP1 (HIP1) from Oryza sativa subsp. japonica (Rice).